Consider the following 200-residue polypeptide: Adenylyl-sulfate kinase (200 aa).

36–43 (GLSGSGKS) is a binding site for ATP. The active-site Phosphoserine intermediate is Ser-110.

The protein belongs to the APS kinase family.

The enzyme catalyses adenosine 5'-phosphosulfate + ATP = 3'-phosphoadenylyl sulfate + ADP + H(+). Its pathway is sulfur metabolism; hydrogen sulfide biosynthesis; sulfite from sulfate: step 2/3. Its function is as follows. Catalyzes the synthesis of activated sulfate. This is Adenylyl-sulfate kinase from Clostridium acetobutylicum (strain ATCC 824 / DSM 792 / JCM 1419 / IAM 19013 / LMG 5710 / NBRC 13948 / NRRL B-527 / VKM B-1787 / 2291 / W).